The chain runs to 311 residues: Hevamine-A (311 aa).

Positions 1 to 26 are cleaved as a signal peptide; that stretch reads MAKRTQAILLLLLAISLIMSSSHVDG. Residues 27–302 enclose the GH18 domain; that stretch reads GGIAIYWGQN…SSILDSVLFL (276 aa). 2 cysteine pairs are disulfide-bonded: cysteine 46–cysteine 93 and cysteine 76–cysteine 83. The Proton donor role is filled by glutamate 153. A disulfide bridge links cysteine 185 with cysteine 214. Positions 300–311 are cleaved as a propeptide — removed in mature form; the sequence is LFLHSEECMTVL.

This sequence belongs to the glycosyl hydrolase 18 family. Chitinase class II subfamily.

The protein resides in the vacuole. The enzyme catalyses Random endo-hydrolysis of N-acetyl-beta-D-glucosaminide (1-&gt;4)-beta-linkages in chitin and chitodextrins.. It catalyses the reaction Hydrolysis of (1-&gt;4)-beta-linkages between N-acetylmuramic acid and N-acetyl-D-glucosamine residues in a peptidoglycan and between N-acetyl-D-glucosamine residues in chitodextrins.. Functionally, bifunctional enzyme with lysozyme / chitinase activity. May have a role in plugging the latex vessel and cessation of latex flow. This is Hevamine-A from Hevea brasiliensis (Para rubber tree).